We begin with the raw amino-acid sequence, 360 residues long: A-type ATP synthase subunit C (360 aa).

Residues Met-1–Asn-25 are disordered.

This sequence belongs to the V-ATPase V0D/AC39 subunit family. Has multiple subunits with at least A(3), B(3), C, D, E, F, H, I and proteolipid K(x).

The protein resides in the cell membrane. Its function is as follows. Component of the A-type ATP synthase that produces ATP from ADP in the presence of a proton gradient across the membrane. This chain is A-type ATP synthase subunit C, found in Methanosarcina barkeri (strain Fusaro / DSM 804).